Consider the following 478-residue polypeptide: ATP synthase subunit beta (478 aa).

Residue 164 to 171 (GGAGVGKT) coordinates ATP.

The protein belongs to the ATPase alpha/beta chains family. In terms of assembly, F-type ATPases have 2 components, CF(1) - the catalytic core - and CF(0) - the membrane proton channel. CF(1) has five subunits: alpha(3), beta(3), gamma(1), delta(1), epsilon(1). CF(0) has three main subunits: a(1), b(2) and c(9-12). The alpha and beta chains form an alternating ring which encloses part of the gamma chain. CF(1) is attached to CF(0) by a central stalk formed by the gamma and epsilon chains, while a peripheral stalk is formed by the delta and b chains.

It localises to the cell membrane. It carries out the reaction ATP + H2O + 4 H(+)(in) = ADP + phosphate + 5 H(+)(out). Its function is as follows. Produces ATP from ADP in the presence of a proton gradient across the membrane. The catalytic sites are hosted primarily by the beta subunits. This is ATP synthase subunit beta from Streptomyces avermitilis (strain ATCC 31267 / DSM 46492 / JCM 5070 / NBRC 14893 / NCIMB 12804 / NRRL 8165 / MA-4680).